A 105-amino-acid polypeptide reads, in one-letter code: Acylphosphatase (105 aa).

The 90-residue stretch at 16-105 (RLTAWVRGRV…RGGYSGFTQA (90 aa)) folds into the Acylphosphatase-like domain. Active-site residues include arginine 31 and asparagine 49.

This sequence belongs to the acylphosphatase family.

It catalyses the reaction an acyl phosphate + H2O = a carboxylate + phosphate + H(+). The chain is Acylphosphatase (acyP) from Acidothermus cellulolyticus (strain ATCC 43068 / DSM 8971 / 11B).